The following is a 283-amino-acid chain: Cilia- and flagella-associated protein 77 (283 aa).

A disordered region spans residues 151 to 170 (DQEDRRQKEPPPIPPNMTFG).

This sequence belongs to the CFAP77 family. Microtubule inner protein component of sperm flagellar doublet microtubules.

It localises to the cytoplasm. The protein localises to the cytoskeleton. The protein resides in the cilium axoneme. Its subcellular location is the flagellum axoneme. In terms of biological role, microtubule inner protein (MIP) part of the dynein-decorated doublet microtubules (DMTs) in cilia axoneme, which is required for motile cilia beating. This Mus musculus (Mouse) protein is Cilia- and flagella-associated protein 77.